Reading from the N-terminus, the 191-residue chain is MAWPCISRLCCLARRWNQLDRSDVAVPLTLHGYSDPGSEESGADCSVSRGNPSVAGARESSRAVPLTQYQRDFGVRTARAGSRDAAQERPSGPGGRRGQSSAPPTRTVYVLPVGDADAAVVATTSYRQEFQAWTGVKPSRSTKARTARVVTTHSSGWDPSPGASFQVPEVRKFTPNPSAIFQTSAPQTLNV.

3 S-palmitoyl cysteine lipidation sites follow: Cys-5, Cys-10, and Cys-11. The interval 31–106 (HGYSDPGSEE…RGQSSAPPTR (76 aa)) is disordered. A phosphoserine mark is found at Ser-38 and Ser-41. Mn regions lie at residues 123 to 136 (TTSY…WTGV) and 158 to 170 (DPSP…VPEV). The residue at position 160 (Ser-160) is a Phosphoserine.

Belongs to the STOP family. Interacts with calmodulin. Palmitoylated. Palmitoylation enhances association with microtubules. Expressed in brain. Found in neurons in primary cultures, but absent in glial cells.

Its subcellular location is the golgi apparatus. The protein resides in the cytoplasm. The protein localises to the cytoskeleton. Functionally, may have microtubule-stabilizing activity. The protein is MAP6 domain-containing protein 1 (Map6d1) of Mus musculus (Mouse).